The sequence spans 463 residues: L-seryl-tRNA(Sec) selenium transferase (463 aa).

Lysine 295 is modified (N6-(pyridoxal phosphate)lysine).

This sequence belongs to the SelA family. As to quaternary structure, homodecamer; pentamer of dimers. Binds only one seryl-tRNA(Sec) per dimer. Pyridoxal 5'-phosphate is required as a cofactor.

Its subcellular location is the cytoplasm. It carries out the reaction L-seryl-tRNA(Sec) + selenophosphate + H(+) = L-selenocysteinyl-tRNA(Sec) + phosphate. It participates in aminoacyl-tRNA biosynthesis; selenocysteinyl-tRNA(Sec) biosynthesis; selenocysteinyl-tRNA(Sec) from L-seryl-tRNA(Sec) (bacterial route): step 1/1. In terms of biological role, converts seryl-tRNA(Sec) to selenocysteinyl-tRNA(Sec) required for selenoprotein biosynthesis. This is L-seryl-tRNA(Sec) selenium transferase from Salmonella schwarzengrund (strain CVM19633).